A 288-amino-acid polypeptide reads, in one-letter code: Peroxisomal protein PEX21 (288 aa).

C5 is covalently cross-linked (Glycyl cysteine thioester (Cys-Gly) (interchain with G-Cter in ubiquitin)).

The protein belongs to the peroxin-21 family. In terms of assembly, interacts with PEX7. Interacts with PEX13. Interacts with SES1. Post-translationally, monoubiquitinated at Cys-5; acts as a signal for PEX21 extraction and is required for proper export from peroxisomes and recycling.

It localises to the cytoplasm. Its subcellular location is the cytosol. The protein localises to the peroxisome. Functionally, receptor that mediates peroxisomal import of proteins containing a C-terminal PTS2-type peroxisomal targeting signal via its interaction with PEX7. Interaction with PEX7 only takes place when PEX7 is associated with cargo proteins containing a PTS2 peroxisomal targeting signal. PEX7 along with PTS2-containing cargo proteins are then translocated through the PEX13-PEX14 docking complex together with PEX21. Acts as an activator of the seryl-tRNA synthetase SES1 by increasing its binding to tRNA. This Saccharomyces cerevisiae (strain ATCC 204508 / S288c) (Baker's yeast) protein is Peroxisomal protein PEX21 (PEX21).